The primary structure comprises 256 residues: MLAFGLTVVRHGETQCNKDGLLQGQKIDSLLSDIGIQQSEAAGQYLRDVKFTNVFVSNMKRAKQTAEIIVRNNRTCHDLELVADPSLIERSFGIAEGGRVIDMKNMAKAAGQPLPEFTPPEGETMEQVKLRIKDFLKAMYQRIANDHQDKVQDGGTSSADESTEAPAGLANDGVSSVPVHALVVGHGAYMSIAMRYFFEDLKCPVPRGLDPAQQFSICPNTGMCRFIITLKCSSVDIALSDIKCVFINRRDHFKTN.

The active-site Tele-phosphohistidine intermediate is histidine 11. Glutamate 89 (proton donor/acceptor) is an active-site residue. Residues 147–170 are disordered; sequence HQDKVQDGGTSSADESTEAPAGLA.

It belongs to the phosphoglycerate mutase family.

It localises to the cytoplasm. The protein localises to the nucleus. The protein resides in the mitochondrion. The catalysed reaction is beta-D-fructose 2,6-bisphosphate + H2O = beta-D-fructose 6-phosphate + phosphate. Fructose-bisphosphatase hydrolyzing fructose-2,6-bisphosphate as well as fructose-1,6-bisphosphate. Acts as a negative regulator of glycolysis by lowering intracellular levels of fructose-2,6-bisphosphate in a p53/TP53-dependent manner, resulting in the pentose phosphate pathway (PPP) activation and NADPH production. Contributes to the generation of reduced glutathione to cause a decrease in intracellular reactive oxygen species (ROS) content, correlating with its ability to protect cells from oxidative or metabolic stress-induced cell death. May play a role in mitophagy inhibition. This chain is Probable fructose-2,6-bisphosphatase TIGAR A, found in Danio rerio (Zebrafish).